The sequence spans 342 residues: MDRELIEICKENSATAFSVGYQIVYLIYVVLSVTSIFTCSYFIKTFIWNSTFHPNFKLLLTMYFFAAIFHSFLFTASYLMMIERFLDYQTDCDIHVSMVPYAIVHSSIACCLFCGMLTQVFMVIERLLATIKIESYEHNTSFWHILAYLFFCIVLPLSLLVWAYQDADYNSPVITAISPPKGVEIRLNILYIFCFFLAILALILLQVVRFVNKRRESRIEISLSGRFQIVENIDTTTFISSILIINMIMSVIYIVGTFTLRNFQFDAFINNQPALATVKTIFYLHPLFSFLMPLISSYHLSKMRERRVKRREHLMAIKTKGREGSDAYNQLLHDQWTQHFLK.

Residues 1–22 are Extracellular-facing; that stretch reads MDRELIEICKENSATAFSVGYQ. A helical membrane pass occupies residues 23–43; it reads IVYLIYVVLSVTSIFTCSYFI. The Cytoplasmic segment spans residues 44–61; it reads KTFIWNSTFHPNFKLLLT. The helical transmembrane segment at 62–82 threads the bilayer; the sequence is MYFFAAIFHSFLFTASYLMMI. The Extracellular segment spans residues 83-102; it reads ERFLDYQTDCDIHVSMVPYA. A helical membrane pass occupies residues 103 to 123; the sequence is IVHSSIACCLFCGMLTQVFMV. Over 124-141 the chain is Cytoplasmic; that stretch reads IERLLATIKIESYEHNTS. The chain crosses the membrane as a helical span at residues 142–162; sequence FWHILAYLFFCIVLPLSLLVW. Topologically, residues 163–187 are extracellular; the sequence is AYQDADYNSPVITAISPPKGVEIRL. The helical transmembrane segment at 188-208 threads the bilayer; the sequence is NILYIFCFFLAILALILLQVV. Topologically, residues 209 to 237 are cytoplasmic; it reads RFVNKRRESRIEISLSGRFQIVENIDTTT. The chain crosses the membrane as a helical span at residues 238–258; sequence FISSILIINMIMSVIYIVGTF. The Extracellular segment spans residues 259–274; the sequence is TLRNFQFDAFINNQPA. The chain crosses the membrane as a helical span at residues 275–295; that stretch reads LATVKTIFYLHPLFSFLMPLI. Over 296–342 the chain is Cytoplasmic; the sequence is SSYHLSKMRERRVKRREHLMAIKTKGREGSDAYNQLLHDQWTQHFLK.

This sequence belongs to the nematode receptor-like protein srb family. In terms of tissue distribution, expressed throughout the nervous system, in pharyngeal muscle, hermaphrodite vulval muscles and in the male tail. Not expressed in male somatic gonads or sperm.

Its subcellular location is the cell membrane. It localises to the perikaryon. It is found in the cell projection. The protein resides in the dendrite. G-protein coupled receptor. Plays a role in the navigational capacity of sperm and promotes the targeting of sperm derived from males to the fertilization site in the uterus of hermaphrodites. The protein is Serpentine receptor class beta-16 of Caenorhabditis elegans.